Consider the following 123-residue polypeptide: Small ribosomal subunit protein uS12 (123 aa).

A 3-methylthioaspartic acid modification is found at D89. A disordered region spans residues 103–123 (DTSGVQDRRQGRSKYGAKRPK). Basic residues predominate over residues 113 to 123 (GRSKYGAKRPK).

The protein belongs to the universal ribosomal protein uS12 family. Part of the 30S ribosomal subunit. Contacts proteins S8 and S17. May interact with IF1 in the 30S initiation complex.

With S4 and S5 plays an important role in translational accuracy. Its function is as follows. Interacts with and stabilizes bases of the 16S rRNA that are involved in tRNA selection in the A site and with the mRNA backbone. Located at the interface of the 30S and 50S subunits, it traverses the body of the 30S subunit contacting proteins on the other side and probably holding the rRNA structure together. The combined cluster of proteins S8, S12 and S17 appears to hold together the shoulder and platform of the 30S subunit. The polypeptide is Small ribosomal subunit protein uS12 (Nitratidesulfovibrio vulgaris (strain ATCC 29579 / DSM 644 / CCUG 34227 / NCIMB 8303 / VKM B-1760 / Hildenborough) (Desulfovibrio vulgaris)).